The chain runs to 138 residues: MNTETKALPAWLDKVRWDDNGLVPVIAQEASTNDVLMFAWMNREALAKTIETQRAVYYSRSRKRLWFKGEESGHVQHVHEVRLDCDEDVVLLKVEQVSGIACHTGRHSCFFQKFEGTVDGGDWVAVDPVLKDPEHIYK.

Aspartate 84 contacts Mg(2+). Cysteine 85 contributes to the Zn(2+) binding site. Mg(2+) contacts are provided by aspartate 86 and aspartate 88. Residues cysteine 102 and cysteine 109 each contribute to the Zn(2+) site.

It belongs to the PRA-CH family. As to quaternary structure, homodimer. It depends on Mg(2+) as a cofactor. Zn(2+) is required as a cofactor.

The protein localises to the cytoplasm. The catalysed reaction is 1-(5-phospho-beta-D-ribosyl)-5'-AMP + H2O = 1-(5-phospho-beta-D-ribosyl)-5-[(5-phospho-beta-D-ribosylamino)methylideneamino]imidazole-4-carboxamide. The protein operates within amino-acid biosynthesis; L-histidine biosynthesis; L-histidine from 5-phospho-alpha-D-ribose 1-diphosphate: step 3/9. Catalyzes the hydrolysis of the adenine ring of phosphoribosyl-AMP. The protein is Phosphoribosyl-AMP cyclohydrolase of Burkholderia ambifaria (strain ATCC BAA-244 / DSM 16087 / CCUG 44356 / LMG 19182 / AMMD) (Burkholderia cepacia (strain AMMD)).